Reading from the N-terminus, the 316-residue chain is MTTDELTKSLEAFTHFTRAEWAQLNDGHSAPLTEKERKNLEGIYETISEAEVNDVYMPLSELLYKRMVHNVRLHDDLNRFLKRERKRVPFVIGIAGSVAVGKSTTARLIQALASRWPGSPKVELVTTDGFLYPNEVLEKRGLMKRKGFPESYDIRSLLTFLTDLKAGTPVVKAPMYSHLTYNIEKDHIQTLIEPDVVIVEGINVLQVNRKGKRMPHVFVSDFFDFSIYVDAEEKDILSWYIERFQLLRNTAFQKPESYFHRYRDLTDEEAVAMAESIWHTINGVNLEKNIKPTRLRADLILTKGAHHRVEQVQLRK.

An ATP-binding site is contributed by 96-103 (GSVAVGKS).

Belongs to the prokaryotic pantothenate kinase family.

Its subcellular location is the cytoplasm. It carries out the reaction (R)-pantothenate + ATP = (R)-4'-phosphopantothenate + ADP + H(+). It participates in cofactor biosynthesis; coenzyme A biosynthesis; CoA from (R)-pantothenate: step 1/5. The polypeptide is Pantothenate kinase (Shouchella clausii (strain KSM-K16) (Alkalihalobacillus clausii)).